A 488-amino-acid polypeptide reads, in one-letter code: Ribosomal protein uS12 methylthiotransferase RimO (488 aa).

The MTTase N-terminal domain occupies 4–120; sequence RKVHFVSLGC…LGRVLAGDAE (117 aa). Residues cysteine 13, cysteine 49, cysteine 83, cysteine 155, cysteine 159, and cysteine 162 each coordinate [4Fe-4S] cluster. The Radical SAM core domain maps to 141–377; sequence STPGGSAYVK…MTLQRRISHK (237 aa). One can recognise a TRAM domain in the interval 380–448; it reads AAMIGRELEV…DYDLVGELLD (69 aa).

This sequence belongs to the methylthiotransferase family. RimO subfamily. [4Fe-4S] cluster is required as a cofactor.

It is found in the cytoplasm. It catalyses the reaction L-aspartate(89)-[ribosomal protein uS12]-hydrogen + (sulfur carrier)-SH + AH2 + 2 S-adenosyl-L-methionine = 3-methylsulfanyl-L-aspartate(89)-[ribosomal protein uS12]-hydrogen + (sulfur carrier)-H + 5'-deoxyadenosine + L-methionine + A + S-adenosyl-L-homocysteine + 2 H(+). Its function is as follows. Catalyzes the methylthiolation of an aspartic acid residue of ribosomal protein uS12. This chain is Ribosomal protein uS12 methylthiotransferase RimO, found in Sorangium cellulosum (strain So ce56) (Polyangium cellulosum (strain So ce56)).